The chain runs to 276 residues: Tryptophan synthase alpha chain (276 aa).

Active-site proton acceptor residues include E46 and E57.

Belongs to the TrpA family. In terms of assembly, tetramer of two alpha and two beta chains.

It carries out the reaction (1S,2R)-1-C-(indol-3-yl)glycerol 3-phosphate + L-serine = D-glyceraldehyde 3-phosphate + L-tryptophan + H2O. The protein operates within amino-acid biosynthesis; L-tryptophan biosynthesis; L-tryptophan from chorismate: step 5/5. The alpha subunit is responsible for the aldol cleavage of indoleglycerol phosphate to indole and glyceraldehyde 3-phosphate. In Halobacterium salinarum (strain ATCC 29341 / DSM 671 / R1), this protein is Tryptophan synthase alpha chain.